The sequence spans 529 residues: Delayed-rectifier potassium channel regulatory subunit KCNS1 (529 aa).

At 1–217 the chain is on the cytoplasmic side; sequence MLMLLVRGTH…LTMENPGYSL (217 aa). The chain crosses the membrane as a helical span at residues 218–239; the sequence is PSKLFSCVSISVVLASIAAMCI. The Extracellular portion of the chain corresponds to 240–270; that stretch reads HSLPEYQAREAAAAVAAVAAGRSPEGVRDDP. A helical transmembrane segment spans residues 271–293; the sequence is VLRRLEYFCIAWFSFEVSSRLLL. At 294–304 the chain is on the cytoplasmic side; it reads APSTRNFFCHP. The chain crosses the membrane as a helical span at residues 305–322; the sequence is LNLIDIVSVLPFYLTLLA. Over 323–340 the chain is Extracellular; the sequence is GVALGDQGGTGGKELGHL. Residues 341-361 form a helical; Voltage-sensor membrane-spanning segment; that stretch reads GKVVQVFRLMRIFRVLKLARH. At 362-376 the chain is on the cytoplasmic side; that stretch reads STGLRSLGATLKHSY. A helical membrane pass occupies residues 377–398; the sequence is REVGILLLYLAVGVSVFSGVAY. Residues 399-411 are Extracellular-facing; sequence TAEKEEDVGFNTI. Positions 412–423 form an intramembrane region, helical; the sequence is PACWWWGTVSMT. A Selectivity filter motif is present at residues 424 to 429; that stretch reads TVGYGD. Residues 424–431 lie within the membrane without spanning it; that stretch reads TVGYGDVV. Over 432-438 the chain is Extracellular; the sequence is PVTVAGK. A helical membrane pass occupies residues 439-467; it reads LAASGCILGGILVVALPITIIFNKFSHFY. At 468-529 the chain is on the cytoplasmic side; that stretch reads RRQKALEAAV…PSEPPHPQMY (62 aa). Residues 494–529 are disordered; the sequence is GVSEASLETSRETSQEGRSADLETQAPSEPPHPQMY. Residues 502–514 are compositionally biased toward basic and acidic residues; the sequence is TSRETSQEGRSAD.

It belongs to the potassium channel family. S (TC 1.A.1.2) subfamily. Kv9.1/KCNS1 sub-subfamily. In terms of assembly, heterotetramer with KCNB1. Heterotetramer with KCNB2. Does not form homomultimers.

The protein localises to the cell membrane. In terms of biological role, potassium channel regulatory subunit that modulate the delayed rectifier voltage-gated potassium channel activity of KCNB1 and KCNB2 by altering their kinetics, expression levels, and shifting the half-inactivation potential to more polarized values. While it does not form functional channels on its own, it can form functional heterotetrameric channels with KCNB1 and KCNB2. Each regulatory subunit has unique regulatory properties that can lead to extensive inhibition, significant changes in kinetics, and/or substantial shifts in the voltage dependencies of the inactivation process. In Chlorocebus aethiops (Green monkey), this protein is Delayed-rectifier potassium channel regulatory subunit KCNS1.